The sequence spans 416 residues: Histidine--tRNA ligase (416 aa).

Belongs to the class-II aminoacyl-tRNA synthetase family.

It localises to the cytoplasm. It carries out the reaction tRNA(His) + L-histidine + ATP = L-histidyl-tRNA(His) + AMP + diphosphate + H(+). The protein is Histidine--tRNA ligase (hisS) of Methanocaldococcus jannaschii (strain ATCC 43067 / DSM 2661 / JAL-1 / JCM 10045 / NBRC 100440) (Methanococcus jannaschii).